Here is a 422-residue protein sequence, read N- to C-terminus: Inner membrane ALBINO3-like protein 2, chloroplastic (422 aa).

Residues 1 to 10 show a composition bias toward polar residues; that stretch reads MALQMKQSPS. The segment at 1-22 is disordered; it reads MALQMKQSPSMGVRRASQPVLP. A helical membrane pass occupies residues 65 to 85; that stretch reads LYTLAEGGPIDVLAQFFEFVL. The Stromal segment spans residues 86–96; sequence QTLDEGLESAK. A helical membrane pass occupies residues 97-117; it reads IPYSYGFAIIALTVLVKVATF. The Lumenal portion of the chain corresponds to 118 to 166; it reads PLTQKQVESTLSLQALQPRVKELQAKYADDPENLQLETARLYKEAGVNP. The helical transmembrane segment at 167–187 threads the bilayer; sequence LAGCFPTLATIPVFIGLYNAL. Topologically, residues 188–225 are stromal; sequence SNAAKEGLLTEGFFWIPSLGGPTTIGGGLEWLVPFENG. A helical transmembrane segment spans residues 226-246; it reads APPVGWANAAAYLVMPVLLVA. Residues 247-275 are Lumenal-facing; sequence SQYASQKIISSQNNQDPSQQQAQAILKFL. Residues 276–296 form a helical membrane-spanning segment; that stretch reads PLMIGWFSLNVPSGLTLYWFV. Residues 297-422 lie on the Stromal side of the membrane; that stretch reads NNLLSTGQQL…GSEEGKDNSA (126 aa). A disordered region spans residues 325-422; sequence TAGSSTPIVK…GSEEGKDNSA (98 aa). A compositionally biased stretch (basic and acidic residues) spans 334 to 350; it reads KPKEERVKKVTGKELGS. Over residues 358–367 the composition is skewed to acidic residues; the sequence is DGEEVEDVEV. Low complexity predominate over residues 368–380; sequence EVVSSGSSSSSGS. Basic and acidic residues predominate over residues 386-400; the sequence is RKGEKFRALKAREAA.

The protein belongs to the OXA1/ALB3/YidC (TC 2.A.9.2) family.

The protein resides in the plastid. The protein localises to the chloroplast thylakoid membrane. In terms of biological role, required for the insertion of some light-harvesting complexes (LHC) proteins into the chloroplast thylakoid membrane. Essential for the assembly and activity of LHC I and II. Its function is probably partly distinct from that of ALB3.1. The protein is Inner membrane ALBINO3-like protein 2, chloroplastic (ALB3.2) of Chlamydomonas reinhardtii (Chlamydomonas smithii).